The primary structure comprises 655 residues: p-hydroxybenzoic acid efflux pump subunit AaeB (655 aa).

A run of 11 helical transmembrane segments spans residues phenylalanine 13 to leucine 33, tryptophan 38 to proline 58, leucine 69 to isoleucine 89, leucine 93 to valine 113, tryptophan 121 to leucine 141, glutamate 152 to isoleucine 172, leucine 370 to valine 390, phenylalanine 407 to proline 427, glutamine 431 to valine 451, methionine 459 to phenylalanine 479, and phenylalanine 482 to leucine 502.

The protein belongs to the aromatic acid exporter ArAE (TC 2.A.85) family.

It localises to the cell inner membrane. Functionally, forms an efflux pump with AaeA. Could function as a metabolic relief valve, allowing to eliminate certain compounds when they accumulate to high levels in the cell. The sequence is that of p-hydroxybenzoic acid efflux pump subunit AaeB from Escherichia coli (strain K12 / MC4100 / BW2952).